Here is a 415-residue protein sequence, read N- to C-terminus: Probable RAD2-like endonuclease 369L (415 aa).

Residues 1–114 form an N-domain region; the sequence is MGIKNLTKFI…EDVKKKTLSL (114 aa). Mg(2+) is bound by residues Asp34, Glu86, Glu198, Glu200, Asp219, Asp221, and Asp277. Positions 163 to 297 are I-domain; the sequence is VKQRHRYDIR…VKSYELIKVQ (135 aa).

The protein belongs to the XPG/RAD2 endonuclease family. Mg(2+) is required as a cofactor.

It localises to the host nucleus. Its function is as follows. Probable endonuclease. The sequence is that of Probable RAD2-like endonuclease 369L from Acheta domesticus (House cricket).